A 261-amino-acid chain; its full sequence is Triosephosphate isomerase (261 aa).

10–12 (NWK) provides a ligand contact to substrate. The active-site Electrophile is H100. E172 functions as the Proton acceptor in the catalytic mechanism. Residues G178, S218, and 239–240 (GG) contribute to the substrate site.

Belongs to the triosephosphate isomerase family. As to quaternary structure, homodimer.

It localises to the cytoplasm. It carries out the reaction D-glyceraldehyde 3-phosphate = dihydroxyacetone phosphate. Its pathway is carbohydrate biosynthesis; gluconeogenesis. It participates in carbohydrate degradation; glycolysis; D-glyceraldehyde 3-phosphate from glycerone phosphate: step 1/1. Functionally, involved in the gluconeogenesis. Catalyzes stereospecifically the conversion of dihydroxyacetone phosphate (DHAP) to D-glyceraldehyde-3-phosphate (G3P). In Mycobacterium tuberculosis (strain CDC 1551 / Oshkosh), this protein is Triosephosphate isomerase.